A 1021-amino-acid polypeptide reads, in one-letter code: Sodium/potassium-transporting ATPase subunit alpha-1 (1021 aa).

A propeptide spanning residues 1-5 (MGKGV) is cleaved from the precursor. A compositionally biased stretch (basic and acidic residues) spans 1 to 11 (MGKGVGRDKYE). The disordered stretch occupies residues 1–36 (MGKGVGRDKYEPAAVSEHGDKKKAKKERDMDELKKE). At 4 to 85 (GVGRDKYEPA…NALTPPPTTP (82 aa)) the chain is on the cytoplasmic side. Lys-9 bears the N6-acetyllysine mark. Tyr-10 is modified (phosphotyrosine). The residue at position 16 (Ser-16) is a Phosphoserine; by PKC. Lys-21 is subject to N6-acetyllysine. The span at 26–36 (KERDMDELKKE) shows a compositional bias: basic and acidic residues. Ser-38 and Ser-45 each carry phosphoserine. The interval 80-82 (PPP) is phosphoinositide-3 kinase binding. The chain crosses the membrane as a helical span at residues 86-106 (EWVKFCRQLFGGFSMLLWIGA). The Extracellular portion of the chain corresponds to 107–129 (ILCFLAYGIQAATEEEPQNDNLY). Residues 130–150 (LGVVLSAVVIITGCFSYYQEA) traverse the membrane as a helical segment. Topologically, residues 151–286 (KSSKIMESFK…GGQTPIAAEI (136 aa)) are cytoplasmic. A disordered region spans residues 214–233 (SSLTGESEPQTRSPDFTNEN). Ser-226 carries the post-translational modification Phosphoserine. A Phosphotyrosine modification is found at Tyr-258. The helical transmembrane segment at 287–306 (EHFIHIITGVAVFLGVSFFI) threads the bilayer. The Extracellular segment spans residues 307-318 (LSLILEYTWLEA). The helical transmembrane segment at 319–336 (VIFLIGIIVANVPEGLLA) threads the bilayer. Over 337–770 (TVTVCLTLTA…EEGRLIFDNL (434 aa)) the chain is Cytoplasmic. Asp-374 functions as the 4-aspartylphosphate intermediate in the catalytic mechanism. Phosphoserine is present on residues Ser-450 and Ser-482. ATP is bound at residue Lys-485. At Tyr-540 the chain carries Phosphotyrosine. A mediates interaction with SCN7A region spans residues 594-715 (RAAVPDAVGK…QGAIVAVTGD (122 aa)). The residue at position 659 (Lys-659) is an N6-succinyllysine. 2 positions are modified to phosphoserine: Ser-666 and Ser-673. Mg(2+) is bound by residues Asp-715 and Asp-719. Residues 771–790 (KKSIAYTLTSNIPEITPFLI) form a helical membrane-spanning segment. The Extracellular segment spans residues 791–800 (FIIANIPLPL). A helical transmembrane segment spans residues 801-821 (GTVTILCIDLGTDMVPAISLA). The Cytoplasmic segment spans residues 822–841 (YEQAESDIMKRQPRNPKTDK). A helical transmembrane segment spans residues 842-864 (LVNERLISMAYGQIGMIQALGGF). The Extracellular portion of the chain corresponds to 865–916 (FTYFVILAENGFLPTHLLGLRVDWDDRWINDVEDSYGQQWTYEQRKIVEFTC). The chain crosses the membrane as a helical span at residues 917-936 (HTAFFVSIVVVQWADLVICK). At 937-949 (TRRNSVFQQGMKN) the chain is on the cytoplasmic side. Ser-941 carries the post-translational modification Phosphoserine; by PKA. The helical transmembrane segment at 950 to 968 (KILIFGLFEETALAAFLSY) threads the bilayer. Residues 969–983 (CPGMGVALRMYPLKP) are Extracellular-facing. A helical transmembrane segment spans residues 984 to 1004 (TWWFCAFPYSLLIFVYDEVRK). Residues 1005–1021 (LIIRRRPGGWVEKETYY) are Cytoplasmic-facing.

This sequence belongs to the cation transport ATPase (P-type) (TC 3.A.3) family. Type IIC subfamily. As to quaternary structure, the sodium/potassium-transporting ATPase is composed of a catalytic alpha subunit, an auxiliary non-catalytic beta subunit and an additional regulatory subunit. Interacts with regulatory subunit FXYD1. Interacts with regulatory subunit FXYD3. Interacts with SIK1. Interacts with SLC35G1 and STIM1. Interacts with CLN3; this interaction regulates the sodium/potassium-transporting ATPase complex localization at the plasma membrane. Interacts with SCN7A; activates ATP1A1 P-type sodium:potassium-exchanging transporter activity which indirectly signals to nearby neurons to regulate sodium homeostasis. Phosphorylation on Tyr-10 modulates pumping activity. Phosphorylation of Ser-941 by PKA modulates the response of ATP1A1 to PKC. Dephosphorylation by protein phosphatase 2A (PP2A) following increases in intracellular sodium, leading to increase catalytic activity.

It is found in the cell membrane. Its subcellular location is the basolateral cell membrane. The protein localises to the sarcolemma. The protein resides in the cell projection. It localises to the axon. It is found in the melanosome. The enzyme catalyses K(+)(out) + Na(+)(in) + ATP + H2O = K(+)(in) + Na(+)(out) + ADP + phosphate + H(+). Functionally, this is the catalytic component of the active enzyme, which catalyzes the hydrolysis of ATP coupled with the exchange of sodium and potassium ions across the plasma membrane. This action creates the electrochemical gradient of sodium and potassium ions, providing the energy for active transport of various nutrients. Could also be part of an osmosensory signaling pathway that senses body-fluid sodium levels and controls salt intake behavior as well as voluntary water intake to regulate sodium homeostasis. The sequence is that of Sodium/potassium-transporting ATPase subunit alpha-1 (ATP1A1) from Canis lupus familiaris (Dog).